Consider the following 246-residue polypeptide: Phosphate import ATP-binding protein PstB (246 aa).

Residues 3 to 241 (AKTTNLNLFY…PKQEKTKAYL (239 aa)) form the ABC transporter domain. Residue 35–42 (GASGCGKS) participates in ATP binding.

The protein belongs to the ABC transporter superfamily. Phosphate importer (TC 3.A.1.7) family. In terms of assembly, the complex is composed of two ATP-binding proteins (PstB), two transmembrane proteins (PstC and PstA) and a solute-binding protein (PstS).

It localises to the cell inner membrane. It catalyses the reaction phosphate(out) + ATP + H2O = ADP + 2 phosphate(in) + H(+). Functionally, part of the ABC transporter complex PstSACB involved in phosphate import. Responsible for energy coupling to the transport system. The polypeptide is Phosphate import ATP-binding protein PstB (Campylobacter jejuni subsp. jejuni serotype O:2 (strain ATCC 700819 / NCTC 11168)).